Consider the following 212-residue polypeptide: RNA chaperone ProQ (212 aa).

A disordered region spans residues 107–153 (QDKAKAKRVAQAKSANPAAKTAKKPVKKPVAKRPKQTQSSKPAKEPV). Over residues 117–126 (QAKSANPAAK) the composition is skewed to low complexity. The segment covering 127 to 141 (TAKKPVKKPVAKRPK) has biased composition (basic residues).

It belongs to the ProQ family.

It is found in the cytoplasm. Its function is as follows. RNA chaperone with significant RNA binding, RNA strand exchange and RNA duplexing activities. This chain is RNA chaperone ProQ, found in Shewanella halifaxensis (strain HAW-EB4).